Consider the following 642-residue polypeptide: MSPKNKYVYICVEYIYIYFAKIHKQSTLSSDTTKMFVLIDNVLAYLLEQDDLFVTARFAIQGQIVSRRVNKIHISNITDVLLQQFISHTLPYNDNIVPKKILDSMRTAVRQLLEATACVSRECPLVKRSQDIKRARKRLLSDWYRLGADANMDAVLLVVNSAWRFLAVWRPFVNSIQHATQELYQNIAHYLLHGNVNIQRVTALIQLVMGQDDLLFSMDDVLQEVFRIQLYLNKMLPHNSHKWQKPSPFDSANLLLNFRDWTTDNALLQELLLSYPTINKNKHKNHSVPRLIQIWVESYWQDSETTLKDILNFWYSHLAEYYEYQELFADIVQLFINKKRTRQLKIHYIGLTDKEIEENKPPLDYENLFLQYEIDKTNANDELCGATDLSDLLFQWKQGELLEVEAFALNVSPWSLAKTLTLLESSLYLDIETIEFTRHFKHNDTTIDSVFTLSNQLSSYVLETTLQQTHTISYWLQVALSCLYLRNLNSLASIITSLQNHSIERLSLPIDVKSDHLFQRLKVVVHPNNNYNVYRRTIKHIFHSQLPCVPFTSLLIRDITFIRDGNDTFTKDGNNVNMQKFNQITKIVAFAQYLQQKQYEDIHCSNTTARSLLGAMIKVHTLYNDNKDRAYQVSIAKVPRLT.

One can recognise an N-terminal Ras-GEF domain in the interval Glu-224–Lys-339. The 229-residue stretch at Ser-412–Arg-640 folds into the Ras-GEF domain.

As to quaternary structure, interacts with AXL2, BEM1, GSP1 and in haploid cells with AXL1.

It localises to the bud neck. The protein resides in the cytoplasm. It is found in the cell cortex. GDP-GTP exchange factor (GEF) for the small GTPase BUD1/RSR1. Regulates the activity of BUD1 together with BUD2 which is a GTPase-activating protein (GAP) of BUD1. Required to produce both the axial and bipolar patterns of bud site selection. Determines the orientation of division axis. Overexpression can suppress mutations in PRP20 which is the GEF for GSP1. May be a cytoplasmic GEF for GSP1. Might also act on the Ras-like protein CDC42. Appears to bind to Ras proteins but not to activate them. This Saccharomyces cerevisiae (strain ATCC 204508 / S288c) (Baker's yeast) protein is Bud site selection protein 5 (BUD5).